Consider the following 68-residue polypeptide: Pantinin-3 (68 aa).

The first 23 residues, 1 to 23 (MKTQFAILLIALVLFQLLSQSDA), serve as a signal peptide directing secretion. Leucine amide is present on L36. The propeptide occupies 40-68 (GLNELDNLDELFDGEISQADIDFLKELMS).

It belongs to the non-disulfide-bridged peptide (NDBP) superfamily. Short antimicrobial peptide (group 4) family. As to expression, expressed by the venom gland.

It is found in the secreted. The protein localises to the target cell membrane. Functionally, amphipathic peptide that possesses relatively strong activities against Gram-positive bacteria and a fungus, but has very weak antimicrobial activities against Gram-negative bacteria. Also exhibits mild hemolytic activities against human erythrocytes (16 uM induce 70% of hemolysis). Furthermore, this peptide potently inhibits the growth of vancomycin-resistant Enterococcus (VRE) S13, a pathogen that can cause a number of human infections. Minimal inhibitory concentration (MIC) are the following: 16 uM against S.aureus, 6 uM against B.magaterium, 8 uM against M.luteus, 4 uM against VRE, 12 uM against methicillin-resistant S.aureus, 36 uM against E.coli, &gt;87 uM against P.putida, 87 uM against K.oxytoca, &gt;87 uM against E.cloacae, 84 uM against S.enterica and 17 uM against the fungus C.tropicalis. The protein is Pantinin-3 of Pandinus imperator (Emperor scorpion).